We begin with the raw amino-acid sequence, 307 residues long: NAD kinase (307 aa).

D80 acts as the Proton acceptor in catalysis. Residues 80 to 81 (DG), H85, 154 to 155 (ND), H165, H182, D184, 195 to 200 (TAYALS), and Q254 each bind NAD(+).

This sequence belongs to the NAD kinase family. The cofactor is a divalent metal cation.

The protein resides in the cytoplasm. The catalysed reaction is NAD(+) + ATP = ADP + NADP(+) + H(+). Functionally, involved in the regulation of the intracellular balance of NAD and NADP, and is a key enzyme in the biosynthesis of NADP. Catalyzes specifically the phosphorylation on 2'-hydroxyl of the adenosine moiety of NAD to yield NADP. In Acinetobacter baylyi (strain ATCC 33305 / BD413 / ADP1), this protein is NAD kinase.